Here is a 99-residue protein sequence, read N- to C-terminus: Cyclin-dependent protein kinase inhibitor SMR7 (99 aa).

A disordered region spans residues 49–70 (ICITPTARGAKTPECPAAPRKR).

In terms of tissue distribution, expressed in root meristems after induction.

Probable cyclin-dependent protein kinase (CDK) inhibitor that functions as a repressor of mitosis in the endoreduplication cell cycle. Acts as a potent cell cycle inhibitor, regulating a hydroxyurea-dependent checkpoint in leaves. This is Cyclin-dependent protein kinase inhibitor SMR7 from Arabidopsis thaliana (Mouse-ear cress).